The following is a 196-amino-acid chain: UPF0314 protein Oant_0840 (196 aa).

Helical transmembrane passes span 15–35 (WGLG…WLYF), 65–85 (WYTL…TVIA), 127–147 (FGDS…GFLI), and 151–171 (LPTK…LIVI).

The protein belongs to the UPF0314 family.

Its subcellular location is the cell membrane. The chain is UPF0314 protein Oant_0840 from Brucella anthropi (strain ATCC 49188 / DSM 6882 / CCUG 24695 / JCM 21032 / LMG 3331 / NBRC 15819 / NCTC 12168 / Alc 37) (Ochrobactrum anthropi).